Consider the following 131-residue polypeptide: Transcriptional activatory protein CaiF (131 aa).

In terms of biological role, potential transcriptional activator of carnitine metabolism. This chain is Transcriptional activatory protein CaiF (caiF), found in Escherichia coli (strain K12).